The sequence spans 442 residues: Tubulin beta chain (442 aa).

Residues glutamine 11, glutamate 69, serine 138, glycine 142, threonine 143, glycine 144, asparagine 204, and asparagine 226 each contribute to the GTP site. A Mg(2+)-binding site is contributed by glutamate 69.

It belongs to the tubulin family. As to quaternary structure, dimer of alpha and beta chains. A typical microtubule is a hollow water-filled tube with an outer diameter of 25 nm and an inner diameter of 15 nM. Alpha-beta heterodimers associate head-to-tail to form protofilaments running lengthwise along the microtubule wall with the beta-tubulin subunit facing the microtubule plus end conferring a structural polarity. Microtubules usually have 13 protofilaments but different protofilament numbers can be found in some organisms and specialized cells. Mg(2+) serves as cofactor.

The protein localises to the cytoplasm. Its subcellular location is the cytoskeleton. Functionally, tubulin is the major constituent of microtubules, a cylinder consisting of laterally associated linear protofilaments composed of alpha- and beta-tubulin heterodimers. Microtubules grow by the addition of GTP-tubulin dimers to the microtubule end, where a stabilizing cap forms. Below the cap, tubulin dimers are in GDP-bound state, owing to GTPase activity of alpha-tubulin. The sequence is that of Tubulin beta chain from Trypanosoma cruzi.